A 131-amino-acid chain; its full sequence is Large ribosomal subunit protein bL20 (131 aa).

The protein belongs to the bacterial ribosomal protein bL20 family.

Functionally, binds directly to 23S ribosomal RNA and is necessary for the in vitro assembly process of the 50S ribosomal subunit. It is not involved in the protein synthesizing functions of that subunit. The sequence is that of Large ribosomal subunit protein bL20 from Mycolicibacterium paratuberculosis (strain ATCC BAA-968 / K-10) (Mycobacterium paratuberculosis).